The sequence spans 114 residues: Iron-sulfur cluster insertion protein ErpA (114 aa).

Iron-sulfur cluster-binding residues include Cys42, Cys106, and Cys108.

The protein belongs to the HesB/IscA family. As to quaternary structure, homodimer. Iron-sulfur cluster is required as a cofactor.

Its function is as follows. Required for insertion of 4Fe-4S clusters for at least IspG. In Haemophilus ducreyi (strain 35000HP / ATCC 700724), this protein is Iron-sulfur cluster insertion protein ErpA.